Here is a 315-residue protein sequence, read N- to C-terminus: 4-hydroxy-3-methylbut-2-enyl diphosphate reductase (315 aa).

[4Fe-4S] cluster is bound at residue C12. Positions 41 and 74 each coordinate (2E)-4-hydroxy-3-methylbut-2-enyl diphosphate. The dimethylallyl diphosphate site is built by H41 and H74. The isopentenyl diphosphate site is built by H41 and H74. C96 serves as a coordination point for [4Fe-4S] cluster. A (2E)-4-hydroxy-3-methylbut-2-enyl diphosphate-binding site is contributed by H124. H124 contributes to the dimethylallyl diphosphate binding site. Isopentenyl diphosphate is bound at residue H124. E126 acts as the Proton donor in catalysis. T168 serves as a coordination point for (2E)-4-hydroxy-3-methylbut-2-enyl diphosphate. C198 contributes to the [4Fe-4S] cluster binding site. Residues S226, S227, N228, and S270 each coordinate (2E)-4-hydroxy-3-methylbut-2-enyl diphosphate. S226, S227, N228, and S270 together coordinate dimethylallyl diphosphate. Isopentenyl diphosphate-binding residues include S226, S227, N228, and S270.

The protein belongs to the IspH family. It depends on [4Fe-4S] cluster as a cofactor.

It catalyses the reaction isopentenyl diphosphate + 2 oxidized [2Fe-2S]-[ferredoxin] + H2O = (2E)-4-hydroxy-3-methylbut-2-enyl diphosphate + 2 reduced [2Fe-2S]-[ferredoxin] + 2 H(+). The catalysed reaction is dimethylallyl diphosphate + 2 oxidized [2Fe-2S]-[ferredoxin] + H2O = (2E)-4-hydroxy-3-methylbut-2-enyl diphosphate + 2 reduced [2Fe-2S]-[ferredoxin] + 2 H(+). It participates in isoprenoid biosynthesis; dimethylallyl diphosphate biosynthesis; dimethylallyl diphosphate from (2E)-4-hydroxy-3-methylbutenyl diphosphate: step 1/1. The protein operates within isoprenoid biosynthesis; isopentenyl diphosphate biosynthesis via DXP pathway; isopentenyl diphosphate from 1-deoxy-D-xylulose 5-phosphate: step 6/6. Catalyzes the conversion of 1-hydroxy-2-methyl-2-(E)-butenyl 4-diphosphate (HMBPP) into a mixture of isopentenyl diphosphate (IPP) and dimethylallyl diphosphate (DMAPP). Acts in the terminal step of the DOXP/MEP pathway for isoprenoid precursor biosynthesis. In Pseudomonas syringae pv. tomato (strain ATCC BAA-871 / DC3000), this protein is 4-hydroxy-3-methylbut-2-enyl diphosphate reductase.